Here is a 512-residue protein sequence, read N- to C-terminus: Solute carrier family 40 member 2 (512 aa).

The segment at 1–28 (MEEETETRVFLSNEQHQEEEEEEEEEPS) is disordered. Residues 17–27 (QEEEEEEEEEP) show a composition bias toward acidic residues. The next 11 membrane-spanning stretches (helical) occupy residues 55–75 (VALY…MYGV), 105–125 (LVTQ…LLVV), 133–153 (FPVF…GVLS), 187–207 (GIDL…ISFV), 214–234 (ITFA…FISV), 310–330 (IVLP…FGTL), 343–363 (YIIG…TVLY), 376–396 (GVWS…SIWV), 405–425 (MLMA…LAVI), 442–462 (GVQN…GIIV), and 468–488 (FWML…LYTI).

This sequence belongs to the ferroportin (FP) (TC 2.A.100) family. SLC40A subfamily.

It is found in the vacuole membrane. Functionally, vacuolar transporter that is involved in the transport of excess nickel into the vacuole under iron deficiency, increasing cellular tolerance to nickel under iron deficiency stress response. This Arabidopsis thaliana (Mouse-ear cress) protein is Solute carrier family 40 member 2 (IREG2).